The chain runs to 299 residues: Acetylglutamate kinase (299 aa).

Substrate is bound by residues 62 to 63, R84, and N188; that span reads GG.

This sequence belongs to the acetylglutamate kinase family. ArgB subfamily.

Its subcellular location is the cytoplasm. It catalyses the reaction N-acetyl-L-glutamate + ATP = N-acetyl-L-glutamyl 5-phosphate + ADP. It functions in the pathway amino-acid biosynthesis; L-arginine biosynthesis; N(2)-acetyl-L-ornithine from L-glutamate: step 2/4. Catalyzes the ATP-dependent phosphorylation of N-acetyl-L-glutamate. This is Acetylglutamate kinase from Methanosarcina acetivorans (strain ATCC 35395 / DSM 2834 / JCM 12185 / C2A).